Here is a 477-residue protein sequence, read N- to C-terminus: PEP-dependent dihydroxyacetone kinase, phosphoryl donor subunit DhaM (477 aa).

Residues 1–135 form the PTS EIIA type-4 domain; it reads MIGLIIVSHS…QALQAKQQQL (135 aa). H9 (tele-phosphohistidine intermediate) is an active-site residue. Residues 156–243 enclose the HPr domain; it reads ALTTQWVVKN…QLAQHNFGDN (88 aa). The active-site Pros-phosphohistidine intermediate is H170. The interval 269-477 is PTS EI-like, N-terminal part; that stretch reads HAPNTELCIS…IETRSLIVAS (209 aa). Residue H435 is the Tele-phosphohistidine intermediate of the active site.

The protein belongs to the PEP-utilizing enzyme family. As to quaternary structure, homodimer. The dihydroxyacetone kinase complex is composed of a homodimer of DhaM, a homodimer of DhaK and the subunit DhaL.

The catalysed reaction is dihydroxyacetone + phosphoenolpyruvate = dihydroxyacetone phosphate + pyruvate. Its function is as follows. Component of the dihydroxyacetone kinase complex, which is responsible for the phosphoenolpyruvate (PEP)-dependent phosphorylation of dihydroxyacetone. DhaM serves as the phosphoryl donor. Is phosphorylated by phosphoenolpyruvate in an EI- and HPr-dependent reaction, and a phosphorelay system on histidine residues finally leads to phosphoryl transfer to DhaL and dihydroxyacetone. The polypeptide is PEP-dependent dihydroxyacetone kinase, phosphoryl donor subunit DhaM (Providencia stuartii (strain MRSN 2154)).